The sequence spans 268 residues: Orotidine 5'-phosphate decarboxylase (268 aa).

Substrate-binding positions include Asp38, 60-62, 92-101, Tyr218, and Arg236; these read KTH and DRKFADIGNT. The active-site Proton donor is the Lys94.

Belongs to the OMP decarboxylase family.

The enzyme catalyses orotidine 5'-phosphate + H(+) = UMP + CO2. Its pathway is pyrimidine metabolism; UMP biosynthesis via de novo pathway; UMP from orotate: step 2/2. This Candida tropicalis (Yeast) protein is Orotidine 5'-phosphate decarboxylase (URA3).